The following is a 73-amino-acid chain: MLALSRKKDEAIIINDDIEITIIEIKGDQVKLGISAPKSVPIYRKEVYAQILDSNKEAASSVDVKTLNQLFKK.

It belongs to the CsrA/RsmA family. Homodimer; the beta-strands of each monomer intercalate to form a hydrophobic core, while the alpha-helices form wings that extend away from the core.

It is found in the cytoplasm. In terms of biological role, a translational regulator that binds mRNA to regulate translation initiation and/or mRNA stability. Usually binds in the 5'-UTR at or near the Shine-Dalgarno sequence preventing ribosome-binding, thus repressing translation. Its main target seems to be the major flagellin gene, while its function is anatagonized by FliW. In Lachnospira eligens (strain ATCC 27750 / DSM 3376 / VPI C15-48 / C15-B4) (Eubacterium eligens), this protein is Translational regulator CsrA.